The sequence spans 202 residues: LexA repressor (202 aa).

A DNA-binding region (H-T-H motif) is located at residues 27–47 (RAEIAAELGFRSANAAEEHLR). Residues S119 and K156 each act as for autocatalytic cleavage activity in the active site.

Belongs to the peptidase S24 family. As to quaternary structure, homodimer.

The enzyme catalyses Hydrolysis of Ala-|-Gly bond in repressor LexA.. Its function is as follows. Represses a number of genes involved in the response to DNA damage (SOS response), including recA and lexA. In the presence of single-stranded DNA, RecA interacts with LexA causing an autocatalytic cleavage which disrupts the DNA-binding part of LexA, leading to derepression of the SOS regulon and eventually DNA repair. The sequence is that of LexA repressor from Marinobacter nauticus (strain ATCC 700491 / DSM 11845 / VT8) (Marinobacter aquaeolei).